Here is a 466-residue protein sequence, read N- to C-terminus: Zinc metalloproteinase/disintegrin (466 aa).

The N-terminal stretch at 1–6 (FPYQGS) is a signal peptide. Positions 7–174 (SIILESGNVN…PIKKASQLIV (168 aa)) are excised as a propeptide. The Peptidase M12B domain occupies 180–377 (RYMEIVIVVD…ENPPCILNKP (198 aa)). Glu183 and Asp267 together coordinate Ca(2+). Cystine bridges form between Cys291-Cys372, Cys331-Cys356, and Cys333-Cys339. His316 serves as a coordination point for Zn(2+). Residue Glu317 is part of the active site. 2 residues coordinate Zn(2+): His320 and His326. Ca(2+)-binding residues include Cys372 and Asn375. A propeptide spanning residues 377–401 (PLRTDTVSTPVSGNELLEAGKDYDR) is cleaved from the precursor. The region spanning 385-466 (TPVSGNELLE…GDCPRNPYHA (82 aa)) is the Disintegrin domain. Intrachain disulfides connect Cys422–Cys428, Cys427–Cys452, and Cys440–Cys459. The short motif at 444–446 (RGD) is the Cell attachment site element.

Belongs to the venom metalloproteinase (M12B) family. P-II subfamily. P-IIa sub-subfamily. Monomer. Requires Zn(2+) as cofactor. Expressed by the venom gland.

The protein localises to the secreted. Functionally, impairs hemostasis in the envenomed animal. In terms of biological role, inhibits platelet aggregation induced by ADP, thrombin, platelet-activating factor and collagen. Acts by inhibiting fibrinogen interaction with platelet receptors GPIIb/GPIIIa (ITGA2B/ITGB3). The sequence is that of Zinc metalloproteinase/disintegrin from Deinagkistrodon acutus (Hundred-pace snake).